A 256-amino-acid chain; its full sequence is Histone H1 (256 aa).

Composition is skewed to low complexity over residues 1-19 (MSDS…PPAT) and 27-43 (KKAS…ASAT). 2 disordered regions span residues 1–53 (MSDS…QQMV) and 108–256 (GKGA…AAKK). Phosphoserine is present on Ser11. Residues 45–119 (SHPPTQQMVD…GASGSFKLSA (75 aa)) form the H15 domain. 2 stretches are compositionally biased toward basic and acidic residues: residues 121–140 (AKKE…EKKV) and 176–193 (KTAE…DAKK). Positions 194–229 (TGIIKSKPAATKAKVTAAKPKAVVAKASKAKPAVSA) are enriched in low complexity. Basic residues predominate over residues 245 to 256 (KKPKAKTTAAKK).

Belongs to the histone H1/H5 family. Phosphorylated in oocytes during prophase I of meiosis.

The protein localises to the nucleus. It is found in the chromosome. Its function is as follows. Histones H1 are necessary for the condensation of nucleosome chains into higher-order structures. This is Histone H1 (His1) from Drosophila melanogaster (Fruit fly).